We begin with the raw amino-acid sequence, 337 residues long: Holliday junction branch migration complex subunit RuvB (337 aa).

The segment at 4 to 184 is large ATPase domain (RuvB-L); sequence ADRLIQPQVL…FGIPLRLEFY (181 aa). ATP is bound by residues Arg-24, Gly-65, Lys-68, Thr-69, Thr-70, 131 to 133, Arg-174, Tyr-184, and Arg-221; that span reads EDY. Thr-69 serves as a coordination point for Mg(2+). The tract at residues 185–255 is small ATPAse domain (RuvB-S); sequence NVKDLCTIVT…VAQQALDMLD (71 aa). Positions 258–337 are head domain (RuvB-H); that stretch reads QEGFDYLDRK…FNIITPDVPK (80 aa). Arg-294, Arg-313, and Arg-318 together coordinate DNA.

Belongs to the RuvB family. As to quaternary structure, homohexamer. Forms an RuvA(8)-RuvB(12)-Holliday junction (HJ) complex. HJ DNA is sandwiched between 2 RuvA tetramers; dsDNA enters through RuvA and exits via RuvB. An RuvB hexamer assembles on each DNA strand where it exits the tetramer. Each RuvB hexamer is contacted by two RuvA subunits (via domain III) on 2 adjacent RuvB subunits; this complex drives branch migration. In the full resolvosome a probable DNA-RuvA(4)-RuvB(12)-RuvC(2) complex forms which resolves the HJ.

The protein resides in the cytoplasm. The catalysed reaction is ATP + H2O = ADP + phosphate + H(+). Its function is as follows. The RuvA-RuvB-RuvC complex processes Holliday junction (HJ) DNA during genetic recombination and DNA repair, while the RuvA-RuvB complex plays an important role in the rescue of blocked DNA replication forks via replication fork reversal (RFR). RuvA specifically binds to HJ cruciform DNA, conferring on it an open structure. The RuvB hexamer acts as an ATP-dependent pump, pulling dsDNA into and through the RuvAB complex. RuvB forms 2 homohexamers on either side of HJ DNA bound by 1 or 2 RuvA tetramers; 4 subunits per hexamer contact DNA at a time. Coordinated motions by a converter formed by DNA-disengaged RuvB subunits stimulates ATP hydrolysis and nucleotide exchange. Immobilization of the converter enables RuvB to convert the ATP-contained energy into a lever motion, pulling 2 nucleotides of DNA out of the RuvA tetramer per ATP hydrolyzed, thus driving DNA branch migration. The RuvB motors rotate together with the DNA substrate, which together with the progressing nucleotide cycle form the mechanistic basis for DNA recombination by continuous HJ branch migration. Branch migration allows RuvC to scan DNA until it finds its consensus sequence, where it cleaves and resolves cruciform DNA. The sequence is that of Holliday junction branch migration complex subunit RuvB from Shewanella denitrificans (strain OS217 / ATCC BAA-1090 / DSM 15013).